Consider the following 249-residue polypeptide: UDP-2,3-diacylglucosamine hydrolase (249 aa).

The Mn(2+) site is built by Asp7, His9, Asp40, Asn78, and His113. Residue 78–79 (NR) participates in substrate binding. Residues Asp121, Ser159, Thr163, Lys166, and His194 each coordinate substrate. Mn(2+) contacts are provided by His194 and His196.

Belongs to the LpxH family. It depends on Mn(2+) as a cofactor.

Its subcellular location is the cell inner membrane. It catalyses the reaction UDP-2-N,3-O-bis[(3R)-3-hydroxytetradecanoyl]-alpha-D-glucosamine + H2O = 2-N,3-O-bis[(3R)-3-hydroxytetradecanoyl]-alpha-D-glucosaminyl 1-phosphate + UMP + 2 H(+). It participates in glycolipid biosynthesis; lipid IV(A) biosynthesis; lipid IV(A) from (3R)-3-hydroxytetradecanoyl-[acyl-carrier-protein] and UDP-N-acetyl-alpha-D-glucosamine: step 4/6. Hydrolyzes the pyrophosphate bond of UDP-2,3-diacylglucosamine to yield 2,3-diacylglucosamine 1-phosphate (lipid X) and UMP by catalyzing the attack of water at the alpha-P atom. Involved in the biosynthesis of lipid A, a phosphorylated glycolipid that anchors the lipopolysaccharide to the outer membrane of the cell. The chain is UDP-2,3-diacylglucosamine hydrolase from Pseudomonas fluorescens (strain SBW25).